The sequence spans 1025 residues: Multidrug resistance protein MdtC (1025 aa).

12 consecutive transmembrane segments (helical) span residues 3 to 23 (FFAL…AITL), 333 to 353 (EVEQ…FLFL), 360 to 380 (IIPA…MYLC), 387 to 407 (LSLM…IVVL), 431 to 451 (VGFT…PLLL), 463 to 483 (FAVT…TLTP), 528 to 548 (LVGM…ISIP), 853 to 873 (VILI…LYES), 875 to 895 (VHPL…LLAL), 897 to 917 (LFNA…IGIV), 953 to 973 (PIMM…LSGG), and 984 to 1004 (ITIV…TPVV).

It belongs to the resistance-nodulation-cell division (RND) (TC 2.A.6) family. MdtC subfamily. In terms of assembly, part of a tripartite efflux system composed of MdtA, MdtB and MdtC. MdtC forms a heteromultimer with MdtB.

It is found in the cell inner membrane. Its function is as follows. The MdtABC tripartite complex confers resistance against novobiocin and deoxycholate. In Escherichia coli O157:H7 (strain EC4115 / EHEC), this protein is Multidrug resistance protein MdtC.